Here is a 502-residue protein sequence, read N- to C-terminus: MEEFQVYLELNRSRRHDFLYPLIFREYIYALAHDHGLNKSMIFLENQGYGNKFSSLIVKRLIIRMDQQNHLIISANDSNQNPFFGHNNNLYSQMISAGFAVIVEIPFSLRLLSYSQGEEVAKSHNLQSIHSIFPFLEDKFSHLNYALDVLIPHPIHLEILVQALRYWVKDASSLHLLRFSLYEYCNLKSFITPKKSISILNPRLFLFLYNSHACEYESIFLFLRNQSSHLRSTSSGVFLERIFFYGKIEYLVEVFYNDFQNNLWLFKDPFIHFIRYQGKAILASKDTSLLMNKWKYYFVDLWQYYFYMWSQSGRVRINQLSKYSLDFLGYLSSVRLNPSVVRSQMLENSFIIDNTMKKLDTRIPIISLIGSLSKAKFCNTLGHPISKPTWADSSDSDIIDRFVRICRNLSHYHSGSSKKKSLYRIKYILRFSCVKTLARKHKSTVRAFLKRLESEFLEEFFTEEEHVFSLIFPRVFFTSRKLYRGRIWYLDIICINALVNHE.

Belongs to the intron maturase 2 family. MatK subfamily.

It localises to the plastid. It is found in the chloroplast. Its function is as follows. Usually encoded in the trnK tRNA gene intron. Probably assists in splicing its own and other chloroplast group II introns. The polypeptide is Maturase K (Fremontodendron californicum (California flannelbush)).